Consider the following 81-residue polypeptide: Defensin-like protein 311 (81 aa).

Positions 1-24 (MEKISAFFVILFLVSSCLVTMSVG) are cleaved as a signal peptide. 3 disulfides stabilise this stretch: Cys-27-Cys-50, Cys-33-Cys-57, and Cys-41-Cys-59.

The protein belongs to the DEFL family.

Its subcellular location is the secreted. The sequence is that of Defensin-like protein 311 from Arabidopsis thaliana (Mouse-ear cress).